The following is a 327-amino-acid chain: 4-hydroxythreonine-4-phosphate dehydrogenase (327 aa).

Substrate is bound by residues His134 and Thr135. Residues His164, His209, and His264 each contribute to the a divalent metal cation site. Lys272, Asn281, and Arg290 together coordinate substrate.

The protein belongs to the PdxA family. As to quaternary structure, homodimer. Zn(2+) is required as a cofactor. The cofactor is Mg(2+). Requires Co(2+) as cofactor.

The protein localises to the cytoplasm. The catalysed reaction is 4-(phosphooxy)-L-threonine + NAD(+) = 3-amino-2-oxopropyl phosphate + CO2 + NADH. It functions in the pathway cofactor biosynthesis; pyridoxine 5'-phosphate biosynthesis; pyridoxine 5'-phosphate from D-erythrose 4-phosphate: step 4/5. Functionally, catalyzes the NAD(P)-dependent oxidation of 4-(phosphooxy)-L-threonine (HTP) into 2-amino-3-oxo-4-(phosphooxy)butyric acid which spontaneously decarboxylates to form 3-amino-2-oxopropyl phosphate (AHAP). This Shewanella frigidimarina (strain NCIMB 400) protein is 4-hydroxythreonine-4-phosphate dehydrogenase.